Reading from the N-terminus, the 360-residue chain is Protein Wnt-2 (360 aa).

The first 37 residues, 1–37 (MIPRRSCWLILLLNLLNVQSLLDASWWSTVAQLSTAL), serve as a signal peptide directing secretion. Cystine bridges form between cysteine 80–cysteine 91, cysteine 130–cysteine 138, cysteine 140–cysteine 158, cysteine 213–cysteine 227, cysteine 215–cysteine 222, cysteine 289–cysteine 320, cysteine 305–cysteine 315, cysteine 319–cysteine 359, cysteine 335–cysteine 350, cysteine 337–cysteine 347, and cysteine 342–cysteine 343. N-linked (GlcNAc...) asparagine glycosylation occurs at asparagine 90. Serine 219 carries O-palmitoleoyl serine; by mom-1 lipidation. Asparagine 352 is a glycosylation site (N-linked (GlcNAc...) asparagine).

It belongs to the Wnt family. In terms of processing, palmitoleoylation is required for efficient binding to frizzled receptors. Depalmitoleoylation leads to Wnt signaling pathway inhibition. Expressed in intestine, pharynx, anterior body wall muscle, vulva, some pharyngeal neurons and SMD head neurons. Expressed along the boundary between the intestine and muscle or hypodermis, but is also expressed in the hypodermis in cells including seam cells.

Its subcellular location is the secreted. The protein resides in the extracellular space. The protein localises to the extracellular matrix. Functionally, ligand for members of the frizzled family of seven transmembrane receptors. Probable developmental protein. May be a signaling molecule which affects the development of discrete regions of tissues. Is likely to signal over only few cell diameters. Involved in the correct positioning of the developing nerve ring and in axon guidance of SIA and SIB neurons, probably by binding to tyrosine kinase receptor cam-1. In addition, regulates the positioning of some head neuronal cells, muscle arms associated with the nerve ring and the excretory pore. Together with Wnt ligand cwn-1, regulates the migration of CAN, ALM, BDU and HSN neurons during embryogenesis, the migration of QL and QR neuroblast descendants during larval development, and polarity of ALM neurons. May act through the wnt receptor cfz-2 to regulate QR neuroblast descendant migration, and to direct ALM migration. Also plays a role in axon growth and guidance in HSN and male CP neurons. In addition, together with wnt ligand cwn-1, negatively regulates developmental neurite pruning of AIM neurons probably by acting as a ligand for receptor tyrosine kinase cam-1. Through the cam-1 receptor also probably regulates the outgrowth of neurites from RME GABAergic motor neurons. May act redundantly with other Wnt ligands such as cwn-1 and mom-2 to control seam cell polarity. The protein is Protein Wnt-2 of Caenorhabditis elegans.